The primary structure comprises 791 residues: IQ motif and ubiquitin-like domain-containing protein (791 aa).

Residues 1–73 (MSNQQEKYEA…SDQSFSSLEP (73 aa)) form a disordered region. Residues 131–207 (ATVKVVLIPV…VQVEIFSTNP (77 aa)) enclose the Ubiquitin-like domain. In terms of domain architecture, IQ spans 338 to 367 (RLKAVIVIQTYYRQWHAKIFVENLRRQKSL).

In terms of assembly, component of the axonemal radial spoke 1 (RS1) complex, at least composed of spoke head proteins RSPH1, RSPH3, RSPH9 and the cilia-specific component RSPH4A or sperm-specific component RSPH6A, spoke stalk proteins RSPH14, DNAJB13, DYDC1, ROPN1L and NME5, and the anchor protein IQUB. Does not appear to be part of radial spoke complexes 2 or 3 (RS2 or RS3). Interacts with CALM1. Interacts with DNAJB13. Interacts with DYNLL2. Interacts with NME5. Interacts with RSPH3. Interacts with RSPH9. Interacts with ZMYND10. Interacts with calmodulin; the interaction occurs in conditions of low but not high calcium.

Its subcellular location is the cytoplasm. It is found in the cytoskeleton. The protein resides in the flagellum axoneme. It localises to the cell projection. The protein localises to the cilium. Adapter protein that anchors the radial spoke 1 (RS1) complex to the A microtubule of outer doublet microtubules in axonemes. The triple radial spokes (RS1, RS2 and RS3) are required to modulate beating of the sperm flagellum. May play a role in inhibiting signaling via MAPK1/ERK2 and MAPK3/ERK1. Additionally, may play a role in the functioning of cilia. Not required for the functioning of tracheal or ependymal cilia. The sequence is that of IQ motif and ubiquitin-like domain-containing protein (IQUB) from Homo sapiens (Human).